A 715-amino-acid chain; its full sequence is Beta-galactosidase 9 (715 aa).

Residues 1-20 form the signal peptide; that stretch reads MSGGAVAFLLLVAAAAVANA. Catalysis depends on E178, which acts as the Proton donor. E247 (nucleophile) is an active-site residue.

The protein belongs to the glycosyl hydrolase 35 family.

It localises to the secreted. The protein localises to the extracellular space. The protein resides in the apoplast. The enzyme catalyses Hydrolysis of terminal non-reducing beta-D-galactose residues in beta-D-galactosides.. The chain is Beta-galactosidase 9 from Oryza sativa subsp. japonica (Rice).